The following is a 123-amino-acid chain: Small ribosomal subunit protein uS11 (123 aa).

The protein belongs to the universal ribosomal protein uS11 family. Part of the 30S ribosomal subunit. Interacts with proteins S7 and S18. Binds to IF-3.

Functionally, located on the platform of the 30S subunit, it bridges several disparate RNA helices of the 16S rRNA. Forms part of the Shine-Dalgarno cleft in the 70S ribosome. This Coxiella burnetii (strain CbuG_Q212) (Coxiella burnetii (strain Q212)) protein is Small ribosomal subunit protein uS11.